Reading from the N-terminus, the 320-residue chain is uncharacterized protein (320 aa).

46–53 (DVPGVGKT) is an ATP binding site.

This sequence belongs to the MoxR family.

This is an uncharacterized protein from Bacillus subtilis (strain 168).